The sequence spans 630 residues: Low affinity heme transporter str3 (630 aa).

A compositionally biased stretch (basic and acidic residues) spans 1–26 (MEAKETHSISDHEVELQDAKPEEKSE). The interval 1 to 51 (MEAKETHSISDHEVELQDAKPEEKSENGNFVFEKAFSSDEEKGSGYNTNET) is disordered. Residues 1–79 (MEAKETHSIS…VRDSIYQNKR (79 aa)) are Cytoplasmic-facing. 2 positions are modified to phosphoserine: serine 10 and serine 38. A helical membrane pass occupies residues 80-100 (GMYLAYAFGIAILACSWASAI). The Extracellular segment spans residues 101–120 (QSSTTYSYQVYATASFNRTS). A helical membrane pass occupies residues 121–141 (MISTLEIATAIISSVCKPILG). Residues 142 to 154 (KFSDITSRPMTYT) lie on the Cytoplasmic side of the membrane. Residues 155–175 (LVLLFYVIGFIVVASSSTISA) traverse the membrane as a helical segment. A topological domain (extracellular) is located at residue tyrosine 176. A helical transmembrane segment spans residues 177–197 (VIGSVFISIGSSGLDYLNTLV). Over 198–208 (VGDLTSLKWRG) the chain is Cytoplasmic. The chain crosses the membrane as a helical span at residues 209–229 (FMTALLSTPYIATVWFTGFIV). Over 230–241 (QGIIDSNWRWGY) the chain is Extracellular. A helical transmembrane segment spans residues 242 to 262 (GMFAIIMPAVMTPAVIILMYL). Residues 263–302 (ERQANKDENIKKIINYQTEEKNKNKQSKWQKLWKAVLEVD) lie on the Cytoplasmic side of the membrane. Residues 303 to 323 (LFGLILLGVGWSILLLPFSLT) traverse the membrane as a helical segment. The Extracellular portion of the chain corresponds to 324–335 (SYAKNGWKNPSM). A helical membrane pass occupies residues 336 to 356 (IAMMVVGGVILIAYSGYEMFI). The Cytoplasmic segment spans residues 357–370 (APYPSCPRRVMNRT). A helical transmembrane segment spans residues 371-391 (FITAVIIDFFYYLAGYLQSMY). At 392–406 (FTTYTWILYDWSYRD) the chain is on the extracellular side. A helical transmembrane segment spans residues 407 to 427 (WTYFNNTMTIALCVFGVFAGA). At 428-439 (MHRVFHRYKYLQ) the chain is on the cytoplasmic side. A helical transmembrane segment spans residues 440-460 (IIGLVIKIVGYGILIRPNFAA). At 461 to 465 (TGKVD) the chain is on the extracellular side. A helical transmembrane segment spans residues 466 to 486 (LAWSLILIGMGGSFSVVGSQV). Over 487–502 (SCQASVPHQDLAIASS) the chain is Cytoplasmic. The chain crosses the membrane as a helical span at residues 503-523 (LLPLYTNIGGAIGAAIASPIF). The heme binding stretch occupies residues 522 to 576 (IFSNKVPKYLREYLPSSINDTQVYNFYSDSSLIREYPVGTEIRDGAIKAYSRSMF). Over 524–574 (SNKVPKYLREYLPSSINDTQVYNFYSDSSLIREYPVGTEIRDGAIKAYSRS) the chain is Extracellular. The chain crosses the membrane as a helical span at residues 575–595 (MFFLLVPAVSLSFIPLAAAFW). At 596 to 630 (QSNFYLGNQQNAVEGDQDHKKKGDKETTQEEKIII) the chain is on the cytoplasmic side. The tract at residues 610–630 (GDQDHKKKGDKETTQEEKIII) is disordered. Over residues 611–630 (DQDHKKKGDKETTQEEKIII) the composition is skewed to basic and acidic residues.

The protein belongs to the major facilitator superfamily.

Its subcellular location is the cell membrane. Functionally, low affinity heme transporter involved in the assimilation of exogenous heme during conditions of low cellular iron. The chain is Low affinity heme transporter str3 from Schizosaccharomyces pombe (strain 972 / ATCC 24843) (Fission yeast).